The following is a 225-amino-acid chain: Paired immunoglobulin-like type 2 receptor beta-2 (225 aa).

The signal sequence occupies residues 1–31 (MALLISLPGETPAMAQILLLLSSACLHAGNS). Residues 32–195 (ARSNGGNDFG…NPSLMNLGAM (164 aa)) are Extracellular-facing. Residues Asn-90, Asn-107, and Asn-160 are each glycosylated (N-linked (GlcNAc...) asparagine). A helical transmembrane segment spans residues 196–216 (VTMLLAKVVVIILVYGWMIFL). At 217-225 (RWKQRPDPA) the chain is on the cytoplasmic side.

It is found in the membrane. Its function is as follows. Paired receptors consist of highly related activating and inhibitory receptors and are widely involved in the regulation of the immune system. PILRB2 is probably a cellular signaling activating receptor that associates with ITAM-bearing adapter molecules on the cell surface. This is Paired immunoglobulin-like type 2 receptor beta-2 (Pilrb2) from Mus musculus (Mouse).